We begin with the raw amino-acid sequence, 96 residues long: uncharacterized protein (96 aa).

The next 3 membrane-spanning stretches (helical) occupy residues 14–34 (FIEG…KYWA), 38–58 (LAVT…LLVL), and 67–87 (WPLK…GNFL).

Its subcellular location is the cell membrane. This is an uncharacterized protein from Bacillus subtilis (strain 168).